Here is a 492-residue protein sequence, read N- to C-terminus: Fascin-2 (492 aa).

It belongs to the fascin family. In terms of tissue distribution, localized specifically in the outer and inner segments of the photoreceptor cells in the retina.

Its subcellular location is the cytoplasm. It is found in the cytoskeleton. The protein localises to the cell projection. It localises to the stereocilium. Functionally, acts as an actin bundling protein. May play a pivotal role in photoreceptor cell-specific events, such as disk morphogenesis. The protein is Fascin-2 (FSCN2) of Homo sapiens (Human).